The following is a 396-amino-acid chain: Elongation factor Tu (396 aa).

In terms of domain architecture, tr-type G spans 10 to 206 (KPHVNVGTIG…ALDTYIPTPE (197 aa)). The interval 19–26 (GHVDHGKT) is G1. 19–26 (GHVDHGKT) contributes to the GTP binding site. Thr26 is a binding site for Mg(2+). The interval 60–64 (GITIN) is G2. The segment at 81-84 (DCPG) is G3. Residues 81–85 (DCPGH) and 136–139 (NKCD) each bind GTP. The tract at residues 136-139 (NKCD) is G4. The segment at 174–176 (SAK) is G5.

This sequence belongs to the TRAFAC class translation factor GTPase superfamily. Classic translation factor GTPase family. EF-Tu/EF-1A subfamily. In terms of assembly, monomer.

It localises to the cytoplasm. It carries out the reaction GTP + H2O = GDP + phosphate + H(+). GTP hydrolase that promotes the GTP-dependent binding of aminoacyl-tRNA to the A-site of ribosomes during protein biosynthesis. The sequence is that of Elongation factor Tu from Burkholderia vietnamiensis (strain G4 / LMG 22486) (Burkholderia cepacia (strain R1808)).